The following is a 473-amino-acid chain: 3-isopropylmalate dehydratase large subunit (473 aa).

The interval 289–319 (TVTWGTTPGQTAGITEPIPDPDDLPEEDRDT) is disordered. Residues 291–301 (TWGTTPGQTAG) show a composition bias toward polar residues. Over residues 307–317 (PDPDDLPEEDR) the composition is skewed to acidic residues. [4Fe-4S] cluster is bound by residues C348, C408, and C411.

This sequence belongs to the aconitase/IPM isomerase family. LeuC type 1 subfamily. In terms of assembly, heterodimer of LeuC and LeuD. It depends on [4Fe-4S] cluster as a cofactor.

The catalysed reaction is (2R,3S)-3-isopropylmalate = (2S)-2-isopropylmalate. The protein operates within amino-acid biosynthesis; L-leucine biosynthesis; L-leucine from 3-methyl-2-oxobutanoate: step 2/4. Its function is as follows. Catalyzes the isomerization between 2-isopropylmalate and 3-isopropylmalate, via the formation of 2-isopropylmaleate. This chain is 3-isopropylmalate dehydratase large subunit, found in Halorubrum lacusprofundi (strain ATCC 49239 / DSM 5036 / JCM 8891 / ACAM 34).